Reading from the N-terminus, the 254-residue chain is Triosephosphate isomerase (254 aa).

A substrate-binding site is contributed by 12-14 (NWK). Histidine 99 acts as the Electrophile in catalysis. Glutamate 169 serves as the catalytic Proton acceptor. Residues glycine 175, serine 214, and 235 to 236 (GG) contribute to the substrate site.

The protein belongs to the triosephosphate isomerase family. In terms of assembly, homodimer.

The protein localises to the cytoplasm. It catalyses the reaction D-glyceraldehyde 3-phosphate = dihydroxyacetone phosphate. The protein operates within carbohydrate biosynthesis; gluconeogenesis. Its pathway is carbohydrate degradation; glycolysis; D-glyceraldehyde 3-phosphate from glycerone phosphate: step 1/1. Involved in the gluconeogenesis. Catalyzes stereospecifically the conversion of dihydroxyacetone phosphate (DHAP) to D-glyceraldehyde-3-phosphate (G3P). This chain is Triosephosphate isomerase, found in Bartonella quintana (strain Toulouse) (Rochalimaea quintana).